A 117-amino-acid chain; its full sequence is Putative pterin-4-alpha-carbinolamine dehydratase (117 aa).

It belongs to the pterin-4-alpha-carbinolamine dehydratase family.

It catalyses the reaction (4aS,6R)-4a-hydroxy-L-erythro-5,6,7,8-tetrahydrobiopterin = (6R)-L-erythro-6,7-dihydrobiopterin + H2O. This chain is Putative pterin-4-alpha-carbinolamine dehydratase, found in Aeromonas salmonicida (strain A449).